The chain runs to 503 residues: Alpha-1B-glycoprotein (503 aa).

The signal sequence occupies residues Met1–Gln21. Ig-like V-type domains follow at residues Pro27–Gly115, Glu117–Ile204, Asp208–Ser305, Gly307–Asp405, and Gly406–Ala501. A disulfide bridge connects residues Cys49 and Cys96. Residues Asn137 and Asn182 are each glycosylated (N-linked (GlcNAc...) asparagine). Disulfide bonds link Cys142–Cys185, Cys235–Cys282, Cys333–Cys382, and Cys431–Cys478. Asn379 is a glycosylation site (N-linked (GlcNAc...) asparagine).

In terms of assembly, interacts with CRISP3. Plasma.

It is found in the secreted. The protein is Alpha-1B-glycoprotein of Bos taurus (Bovine).